The sequence spans 209 residues: Uracil phosphoribosyltransferase (209 aa).

5-phospho-alpha-D-ribose 1-diphosphate contacts are provided by residues Arg-79, Arg-104, and 131-139 (DPMLATGGS). Uracil-binding positions include Val-194 and 199–201 (GDA). Position 200 (Asp-200) interacts with 5-phospho-alpha-D-ribose 1-diphosphate.

Belongs to the UPRTase family. It depends on Mg(2+) as a cofactor.

The enzyme catalyses UMP + diphosphate = 5-phospho-alpha-D-ribose 1-diphosphate + uracil. The protein operates within pyrimidine metabolism; UMP biosynthesis via salvage pathway; UMP from uracil: step 1/1. Allosterically activated by GTP. Its function is as follows. Catalyzes the conversion of uracil and 5-phospho-alpha-D-ribose 1-diphosphate (PRPP) to UMP and diphosphate. The polypeptide is Uracil phosphoribosyltransferase (Bacillus mycoides (strain KBAB4) (Bacillus weihenstephanensis)).